A 187-amino-acid polypeptide reads, in one-letter code: MNLLNHFLIAMPSLSDPLFQRSVVYVCEHNENGAMGLVINKPIEDISIESVLEQLEIFSADRDSAISLQKPVMSGGPVAEEHGFILHTPVSGFSSSIKISDSTMITTSKDVLETLGTARQPEKTLVSLGYSSWEKGQLEREILENSWLTVEATPQIIFDTPIAERWHKAAELIGIDIHTISPTAGHA.

This sequence belongs to the UPF0301 (AlgH) family.

This is UPF0301 protein PMI0339 from Proteus mirabilis (strain HI4320).